A 466-amino-acid polypeptide reads, in one-letter code: ATP synthase subunit beta (466 aa).

152-159 contacts ATP; that stretch reads GGAGVGKT.

It belongs to the ATPase alpha/beta chains family. F-type ATPases have 2 components, CF(1) - the catalytic core - and CF(0) - the membrane proton channel. CF(1) has five subunits: alpha(3), beta(3), gamma(1), delta(1), epsilon(1). CF(0) has three main subunits: a(1), b(2) and c(9-12). The alpha and beta chains form an alternating ring which encloses part of the gamma chain. CF(1) is attached to CF(0) by a central stalk formed by the gamma and epsilon chains, while a peripheral stalk is formed by the delta and b chains.

The protein resides in the cell inner membrane. It carries out the reaction ATP + H2O + 4 H(+)(in) = ADP + phosphate + 5 H(+)(out). Its function is as follows. Produces ATP from ADP in the presence of a proton gradient across the membrane. The catalytic sites are hosted primarily by the beta subunits. This chain is ATP synthase subunit beta, found in Helicobacter pylori (strain HPAG1).